Reading from the N-terminus, the 656-residue chain is Choline transporter-like protein 1 (656 aa).

G2 carries the N-myristoyl glycine lipid modification. Topologically, residues 2–29 are cytoplasmic; that stretch reads GCCSSASAAQSSKREWKPLEDRSCTDIP. The chain crosses the membrane as a helical span at residues 30–50; that stretch reads WLLLFVLFCIGMGFICGFSVA. The Extracellular segment spans residues 51–211; it reads TGAAARLVSG…RLISGVMTSK (161 aa). Residues N134 and N179 are each glycosylated (N-linked (GlcNAc...) asparagine). The chain crosses the membrane as a helical span at residues 212 to 232; sequence EIILGLCLLSLVLSMILMVII. The Cytoplasmic portion of the chain corresponds to 233 to 237; sequence RYISR. Residues 238-258 form a helical membrane-spanning segment; that stretch reads VLVWILTILVILGSLGGTGVL. Residues 259–287 are Extracellular-facing; that stretch reads WWLYAKQRRSPKETVIPEQLQIAEDNLRA. Residues 288-308 traverse the membrane as a helical segment; the sequence is LLIYAISATVFTVILFLIMLV. At 309 to 314 the chain is on the cytoplasmic side; it reads MRKRVA. Residues 315–335 traverse the membrane as a helical segment; that stretch reads LTIALFHVAGKVFIHLPLLVF. Residues 336–337 are Extracellular-facing; the sequence is QP. The helical transmembrane segment at 338–358 threads the bilayer; sequence FWTFFALVLFWAYWIMTLLFL. The Cytoplasmic portion of the chain corresponds to 359-379; that stretch reads GTTGSAVQNEQGFVEYKISGP. A helical membrane pass occupies residues 380–400; sequence LQYMWWYHVVGLIWISEFILA. At 401-441 the chain is on the extracellular side; sequence CQQMTVAGAVVTYYFTRDKRNLPFTPILASVNRLIRYHLGT. The chain crosses the membrane as a helical span at residues 442–462; the sequence is VAKGSFIITLVKIPRMILMYI. Topologically, residues 463–536 are cytoplasmic; sequence HSQLKGKENA…RVAAINTVGD (74 aa). A helical transmembrane segment spans residues 537-557; it reads FMLFLGKVLIVCSTGLAGIML. Topologically, residues 558 to 565 are extracellular; sequence LNYQQDYT. Residues 566–586 form a helical membrane-spanning segment; it reads VWVLPLIIVCLFAFLVAHCFL. Topologically, residues 587 to 656 are cytoplasmic; that stretch reads SIYEMVVDVL…KPMASGASSA (70 aa). The interval 635-656 is disordered; that stretch reads AGKGGAADARKLKPMASGASSA. Phosphoserine is present on S651.

It belongs to the CTL (choline transporter-like) family. As to expression, expressed in neurons, oligodendrocytes and astrocytes. Also expressed in the mucosal cell layer of the colon. In the developing brain, isoform 1 is expressed in both neurons and oligodendroglial cells, whereas isoform 2 is restricted to oligodendroglial cells.

It localises to the cell membrane. The protein localises to the mitochondrion outer membrane. The catalysed reaction is choline(out) + n H(+)(in) = choline(in) + n H(+)(out). It catalyses the reaction ethanolamine(out) + n H(+)(in) = ethanolamine(in) + n H(+)(out). In terms of biological role, choline transporter, acts as a choline/H+ antiporter. Also acts as a high-affinity ethanolamine/H+ antiporter, regulating the supply of extracellular ethanolamine (Etn) for the CDP-Etn pathway, redistribute intracellular Etn and balance the CDP-Cho and CDP-Etn arms of the Kennedy pathway. Involved in membrane synthesis and myelin production. The sequence is that of Choline transporter-like protein 1 (Slc44a1) from Rattus norvegicus (Rat).